The sequence spans 90 residues: Mitochondrial import inner membrane translocase subunit Tim8 A (90 aa).

Residues Cys36–Cys59 carry the Twin CX3C motif motif. Cystine bridges form between Cys36–Cys59 and Cys40–Cys55.

This sequence belongs to the small Tim family. As to quaternary structure, heterohexamer; composed of 3 copies of TIMM8A and 3 copies of TIMM13, named soluble 70 kDa complex. Associates with the TIM22 complex, whose core is composed of TIMM22.

The protein resides in the mitochondrion inner membrane. Functionally, mitochondrial intermembrane chaperone that participates in the import and insertion of some multi-pass transmembrane proteins into the mitochondrial inner membrane. Also required for the transfer of beta-barrel precursors from the TOM complex to the sorting and assembly machinery (SAM complex) of the outer membrane. Acts as a chaperone-like protein that protects the hydrophobic precursors from aggregation and guide them through the mitochondrial intermembrane space. The TIMM8-TIMM13 complex mediates the import of some proteins while the predominant TIMM9-TIMM10 70 kDa complex mediates the import of much more proteins. This chain is Mitochondrial import inner membrane translocase subunit Tim8 A (timm8a), found in Takifugu rubripes (Japanese pufferfish).